A 252-amino-acid polypeptide reads, in one-letter code: Triosephosphate isomerase (252 aa).

11–13 (NWK) lines the substrate pocket. The Electrophile role is filled by histidine 97. The Proton acceptor role is filled by glutamate 169. Substrate is bound by residues glycine 175, serine 215, and 236–237 (GG).

The protein belongs to the triosephosphate isomerase family. In terms of assembly, homodimer.

The protein resides in the cytoplasm. It carries out the reaction D-glyceraldehyde 3-phosphate = dihydroxyacetone phosphate. The protein operates within carbohydrate biosynthesis; gluconeogenesis. Its pathway is carbohydrate degradation; glycolysis; D-glyceraldehyde 3-phosphate from glycerone phosphate: step 1/1. Functionally, involved in the gluconeogenesis. Catalyzes stereospecifically the conversion of dihydroxyacetone phosphate (DHAP) to D-glyceraldehyde-3-phosphate (G3P). This chain is Triosephosphate isomerase, found in Mycoplasmoides gallisepticum (strain R(low / passage 15 / clone 2)) (Mycoplasma gallisepticum).